Consider the following 75-residue polypeptide: Metallothionein-like protein 1B (75 aa).

Belongs to the metallothionein superfamily. Type 15 family.

Metallothioneins have a high content of cysteine residues that bind various heavy metals. In Vicia faba (Broad bean), this protein is Metallothionein-like protein 1B (MT1B).